The primary structure comprises 217 residues: Oxygen-evolving enhancer protein 3-1, chloroplastic (217 aa).

A chloroplast-targeting transit peptide spans 1-68; the sequence is MAQAMASMTG…GGALSQAARA (68 aa).

Belongs to the PsbQ family.

The protein localises to the plastid. The protein resides in the chloroplast thylakoid membrane. In Zea mays (Maize), this protein is Oxygen-evolving enhancer protein 3-1, chloroplastic (PSBQ1).